Reading from the N-terminus, the 345-residue chain is Phosphoribosylformylglycinamidine cyclo-ligase (345 aa).

The protein belongs to the AIR synthase family.

The protein localises to the cytoplasm. It catalyses the reaction 2-formamido-N(1)-(5-O-phospho-beta-D-ribosyl)acetamidine + ATP = 5-amino-1-(5-phospho-beta-D-ribosyl)imidazole + ADP + phosphate + H(+). Its pathway is purine metabolism; IMP biosynthesis via de novo pathway; 5-amino-1-(5-phospho-D-ribosyl)imidazole from N(2)-formyl-N(1)-(5-phospho-D-ribosyl)glycinamide: step 2/2. The sequence is that of Phosphoribosylformylglycinamidine cyclo-ligase from Tolumonas auensis (strain DSM 9187 / NBRC 110442 / TA 4).